A 117-amino-acid chain; its full sequence is Large ribosomal subunit protein bL20 (117 aa).

Belongs to the bacterial ribosomal protein bL20 family.

Binds directly to 23S ribosomal RNA and is necessary for the in vitro assembly process of the 50S ribosomal subunit. It is not involved in the protein synthesizing functions of that subunit. The polypeptide is Large ribosomal subunit protein bL20 (Campylobacter jejuni subsp. jejuni serotype O:6 (strain 81116 / NCTC 11828)).